A 436-amino-acid polypeptide reads, in one-letter code: Anaerobic glycerol-3-phosphate dehydrogenase subunit B (436 aa).

Belongs to the anaerobic G-3-P dehydrogenase subunit B family. In terms of assembly, composed of a catalytic GlpA/B dimer and of membrane bound GlpC. It depends on FMN as a cofactor.

It carries out the reaction a quinone + sn-glycerol 3-phosphate = dihydroxyacetone phosphate + a quinol. The protein operates within polyol metabolism; glycerol degradation via glycerol kinase pathway; glycerone phosphate from sn-glycerol 3-phosphate (anaerobic route): step 1/1. Conversion of glycerol 3-phosphate to dihydroxyacetone. Uses fumarate or nitrate as electron acceptor. The polypeptide is Anaerobic glycerol-3-phosphate dehydrogenase subunit B (Vibrio cholerae serotype O1 (strain M66-2)).